The primary structure comprises 257 residues: Imidazole glycerol phosphate synthase subunit HisF (257 aa).

Catalysis depends on residues Asp11 and Asp130.

Belongs to the HisA/HisF family. Heterodimer of HisH and HisF.

Its subcellular location is the cytoplasm. It carries out the reaction 5-[(5-phospho-1-deoxy-D-ribulos-1-ylimino)methylamino]-1-(5-phospho-beta-D-ribosyl)imidazole-4-carboxamide + L-glutamine = D-erythro-1-(imidazol-4-yl)glycerol 3-phosphate + 5-amino-1-(5-phospho-beta-D-ribosyl)imidazole-4-carboxamide + L-glutamate + H(+). Its pathway is amino-acid biosynthesis; L-histidine biosynthesis; L-histidine from 5-phospho-alpha-D-ribose 1-diphosphate: step 5/9. Its function is as follows. IGPS catalyzes the conversion of PRFAR and glutamine to IGP, AICAR and glutamate. The HisF subunit catalyzes the cyclization activity that produces IGP and AICAR from PRFAR using the ammonia provided by the HisH subunit. This is Imidazole glycerol phosphate synthase subunit HisF from Aliivibrio fischeri (strain MJ11) (Vibrio fischeri).